The chain runs to 157 residues: Endoribonuclease YbeY (157 aa).

His-112, His-116, and His-122 together coordinate Zn(2+).

This sequence belongs to the endoribonuclease YbeY family. It depends on Zn(2+) as a cofactor.

It localises to the cytoplasm. Its function is as follows. Single strand-specific metallo-endoribonuclease involved in late-stage 70S ribosome quality control and in maturation of the 3' terminus of the 16S rRNA. The sequence is that of Endoribonuclease YbeY from Marinobacter nauticus (strain ATCC 700491 / DSM 11845 / VT8) (Marinobacter aquaeolei).